The chain runs to 336 residues: Dual specificity mitogen-activated protein kinase kinase sek-1 (336 aa).

Residues 50 to 311 (LVVLEELGKG…YPELLAMPFM (262 aa)) enclose the Protein kinase domain. ATP is bound by residues 56-64 (LGKGGYGIV) and lysine 79. The active-site Proton acceptor is the aspartate 176. Serine 204 is modified (phosphoserine). Threonine 208 is subject to Phosphothreonine.

Belongs to the protein kinase superfamily. STE Ser/Thr protein kinase family. MAP kinase kinase subfamily. Interacts with nsy-1. Interacts with unc-16. The cofactor is Mg(2+). As to expression, expressed in linker cell in males.

The enzyme catalyses L-seryl-[protein] + ATP = O-phospho-L-seryl-[protein] + ADP + H(+). It catalyses the reaction L-threonyl-[protein] + ATP = O-phospho-L-threonyl-[protein] + ADP + H(+). The catalysed reaction is L-tyrosyl-[protein] + ATP = O-phospho-L-tyrosyl-[protein] + ADP + H(+). Activated by nsy-1-mediated phosphorylation. Its function is as follows. Dual specificity protein kinase which acts as an essential component of the p38 signal transduction pathway which is also composed of upstream effector nsy-1 and downstream effector pmk-1. May phosphorylate pmk-1. Downstream of CaMKII unc-43 and adapter protein tir-1, plays a role in determining asymmetric cell fates in olfactory AWC neurons during neuronal development. Activation results in the repression of odorant receptor str-2 expression in one of the 2 AWC neurons. Involved in resistance to pathogenic Gram-positive and Gram-negative bacterial and fungal infection. Involved in resistance to the nematotoxic C.cinerea galectin Cgl2. Probably by promoting pmk-1-mediated activation of skn-1, involved in the up-regulation of gcs-1 and glutathione-S-transferase gst-4 expression upon bacterial infection. Probably downstream of tir-1, required for the expression of antimicrobial peptide nlp-29 in the epidermis in response to fungal infection or physical injury. Regulates susceptibility of B.thuringiensis pore-forming toxin Cry5B and Cry21A. Involved in the response to oxidative stress. May regulate transcription factor daf-16 localization during oxidative stress. By phosphorylating pmk-1, regulates skn-1 localization during oxidative stress. By phosphorylating and activating pmk-1, plays a role in the stabilization of transcription factor rnt-1 in the intestine during oxidative stress. Up-regulates expression of gcs-1 in intestine upon arsenite treatment. Regulates germline proliferation in response to osmotic stress, starvation and germline apoptosis induced by heavy metals, such as Cu(2+). In association with mek-1, regulates germline cell apoptosis in response to oxidative, osmotic and heat shock stresses. Plays a role downstream of tir-1/nsy-1 in regulating susceptibility to anoxia. In males, by regulating pqn-41 expression, involved in non-apoptotic death of the linker cell which guides gonad elongation during larval development. Involved in egg laying. The polypeptide is Dual specificity mitogen-activated protein kinase kinase sek-1 (Caenorhabditis elegans).